We begin with the raw amino-acid sequence, 309 residues long: Uricase-2 isozyme 2 (309 aa).

Active-site charge relay system residues include K18 and T64. Urate contacts are provided by T64, D65, F166, R183, V238, Q239, and N265. H267 (charge relay system) is an active-site residue.

This sequence belongs to the uricase family. Homotetramer.

Its subcellular location is the peroxisome. The enzyme catalyses urate + O2 + H2O = 5-hydroxyisourate + H2O2. It participates in purine metabolism; urate degradation; (S)-allantoin from urate: step 1/3. Catalyzes the oxidation of uric acid to 5-hydroxyisourate, which is further processed to form (S)-allantoin. In Glycine max (Soybean), this protein is Uricase-2 isozyme 2.